Consider the following 857-residue polypeptide: Leucine--tRNA ligase (857 aa).

The short motif at 42–52 (PYPSGRLHMGH) is the 'HIGH' region element. Residues 617-621 (KMSKS) carry the 'KMSKS' region motif. Residue Lys-620 coordinates ATP.

This sequence belongs to the class-I aminoacyl-tRNA synthetase family.

Its subcellular location is the cytoplasm. It carries out the reaction tRNA(Leu) + L-leucine + ATP = L-leucyl-tRNA(Leu) + AMP + diphosphate. The polypeptide is Leucine--tRNA ligase (Vibrio parahaemolyticus serotype O3:K6 (strain RIMD 2210633)).